Consider the following 123-residue polypeptide: Secreted LysM effector Lys1 (123 aa).

The signal sequence occupies residues 1–20 (MMGLAKTLLLASQLTAVVVA). The LysM domain occupies 72-118 (KFCWVQAGNKCYQVAMENHISLADFLKWNPGAGSDCRTLWANTYACV).

The protein belongs to the secreted LysM effector family.

Functionally, might have a role in sequestration of chitin oligosaccharides (breakdown products of fungal cell walls that are released during invasion and act as triggers of host immunity) to dampen host defense. This chain is Secreted LysM effector Lys1, found in Pochonia chlamydosporia (strain 123) (Metacordyceps chlamydosporia).